The sequence spans 526 residues: UDP-glycosyltransferase UGT5 (526 aa).

Residues 1 to 474 (MIFFYFLTLT…TAAVDMPWYQ (474 aa)) lie on the Lumenal side of the membrane. Residues N49, N124, and N283 are each glycosylated (N-linked (GlcNAc...) asparagine). A helical membrane pass occupies residues 475 to 495 (YLLLDVIAFLIFILVSVILII). Over 496 to 526 (YYGVKISLRYLCALIFGNSSSLKPTKKVKDN) the chain is Cytoplasmic.

It belongs to the UDP-glycosyltransferase family.

It localises to the microsome membrane. Its function is as follows. Catalyzes the transfer of a glycosyl group from a UDP-sugar to an acceptor molecule. The chain is UDP-glycosyltransferase UGT5 from Dactylopius coccus (Cochineal).